We begin with the raw amino-acid sequence, 940 residues long: Isoleucine--tRNA ligase (940 aa).

A 'HIGH' region motif is present at residues 58-68 (PYANGSIHIGH). Residue Glu564 participates in L-isoleucyl-5'-AMP binding. Residues 605-609 (KMSKS) carry the 'KMSKS' region motif. Position 608 (Lys608) interacts with ATP. Zn(2+) is bound by residues Cys903, Cys906, Cys923, and Cys926.

This sequence belongs to the class-I aminoacyl-tRNA synthetase family. IleS type 1 subfamily. As to quaternary structure, monomer. The cofactor is Zn(2+).

Its subcellular location is the cytoplasm. The catalysed reaction is tRNA(Ile) + L-isoleucine + ATP = L-isoleucyl-tRNA(Ile) + AMP + diphosphate. In terms of biological role, catalyzes the attachment of isoleucine to tRNA(Ile). As IleRS can inadvertently accommodate and process structurally similar amino acids such as valine, to avoid such errors it has two additional distinct tRNA(Ile)-dependent editing activities. One activity is designated as 'pretransfer' editing and involves the hydrolysis of activated Val-AMP. The other activity is designated 'posttransfer' editing and involves deacylation of mischarged Val-tRNA(Ile). This Shewanella sp. (strain MR-7) protein is Isoleucine--tRNA ligase.